The sequence spans 163 residues: DNA endonuclease I-CreI (163 aa).

Mg(2+) is bound by residues glycine 19 and aspartate 20. Interaction with DNA regions lie at residues 26 to 38 (QIKPNQSYKFKHQ), 44 to 47 (QVTQ), 68 to 70 (RDR), and 138 to 143 (SKTRKT).

Belongs to the LAGLIDADG endonuclease family. As to quaternary structure, homodimer. It depends on Mg(2+) as a cofactor. Mn(2+) is required as a cofactor. The cofactor is Co(2+). Requires Ni(2+) as cofactor. Zn(2+) serves as cofactor.

The protein localises to the plastid. Its subcellular location is the chloroplast. Functionally, endonuclease involved in group I intron homing. Recognizes and cleaves a 19-24 bp palindromic DNA site. In Chlamydomonas reinhardtii (Chlamydomonas smithii), this protein is DNA endonuclease I-CreI.